The primary structure comprises 907 residues: Gamma-tubulin complex component 3 (907 aa).

Alanine 2 bears the N-acetylalanine mark. Serine 113 is subject to Phosphoserine. Over residues 210–230 the composition is skewed to polar residues; it reads NQPSSQATTSKGVPSAVSRNM. A disordered region spans residues 210–241; sequence NQPSSQATTSKGVPSAVSRNMTRSRREGDTGG.

It belongs to the TUBGCP family. In terms of assembly, component of the gamma-tubulin ring complex (gTuRC) consisting of TUBGCP2, TUBGCP3, TUBGCP4, TUBGCP5 and TUBGCP6 and gamma-tubulin TUBG1 or TUBG2. TUBGCP2, TUBGCP3, TUBGCP4, TUBGCP5 and TUBGCP6 assemble in a 5:5:2:1:1 stoichiometry; each is associated with a gamma-tubulin, thereby arranging 14 gamma-tubulins in a helical manner. Gamma-tubulin at the first position is blocked by TUBGCP3 at the last position, allowing 13 protafilaments to grow into a microtubule. The gTuRC (via TUBGCP3 and TUBGCP6) interacts with ACTB and MZT1; the interactions form a luminal bridge that stabilizes the initial structure during complex assembly. The gTuRC (via TUBGCP2) interacts with MZT2A/MZT2B and CDK5RAP2 (via CM1 motif); the interactions play a role in gTuRC activation. Interacts with NIN (via N-terminus); the interaction may promote recruitment of the gamma-tubulin ring complex to the centrosome. Ubiquitously expressed.

The protein resides in the cytoplasm. It localises to the cytoskeleton. The protein localises to the microtubule organizing center. It is found in the centrosome. Its function is as follows. Component of the gamma-tubulin ring complex (gTuRC) which mediates microtubule nucleation. The gTuRC regulates the minus-end nucleation of alpha-beta tubulin heterodimers that grow into microtubule protafilaments, a critical step in centrosome duplication and spindle formation. The sequence is that of Gamma-tubulin complex component 3 (TUBGCP3) from Homo sapiens (Human).